The sequence spans 430 residues: Sulfide-quinone reductase (430 aa).

Residues 9–13 (GGGVG), 34–36 (SDR), 42–43 (TP), and Thr105 each bind FAD. The active-site Cysteine persulfide intermediate is the Cys156. 2 disulfide bridges follow: Cys280–Cys422 and Cys419–Cys430. FAD contacts are provided by Val294 and Gly314. Ile346 contacts a quinone. The active-site Cysteine persulfide intermediate is Cys347. Lys382 is a binding site for FAD.

It belongs to the SQRD family. Homotrimer. FAD serves as cofactor.

Its subcellular location is the membrane. The enzyme catalyses n a quinone + n hydrogen sulfide + n H(+) = polysulfur(n-2) + n a quinol. In terms of biological role, catalyzes the oxidation of hydrogen sulfide, with the help of a quinone. Consecutive reaction cycles lead to the accumulation of a polysulfide product on the active site Cys residues; these products are released when they exceed a critical length, typically as cyclooctasulfur. The chain is Sulfide-quinone reductase from Aquifex aeolicus (strain VF5).